We begin with the raw amino-acid sequence, 337 residues long: Cysteine synthase 3 (337 aa).

Lys47 is modified (N6-(pyridoxal phosphate)lysine). Residues Asn78, 182-186 (GSSGT), and Ser270 each bind pyridoxal 5'-phosphate.

Belongs to the cysteine synthase/cystathionine beta-synthase family. Homodimer. It depends on pyridoxal 5'-phosphate as a cofactor.

It carries out the reaction O-acetyl-L-serine + hydrogen sulfide = L-cysteine + acetate. It participates in amino-acid biosynthesis; L-cysteine biosynthesis; L-cysteine from L-serine: step 2/2. Its function is as follows. Primarily catalyzes the formation of cysteine and acetate from O-acetylserine and hydrogen sulfide. Can also catalyze the formation of cysteine and acetate from S-sulfocysteine and hydrogen sulfide and the formation of cyanoalanine and hydrogen sulfide from either S-sulfocysteine or O-acetylserine and hydrogen cyanide. The polypeptide is Cysteine synthase 3 (Caenorhabditis elegans).